The primary structure comprises 146 residues: 3-hydroxyacyl-[acyl-carrier-protein] dehydratase FabZ (146 aa).

H49 is an active-site residue.

It belongs to the thioester dehydratase family. FabZ subfamily.

Its subcellular location is the cytoplasm. The catalysed reaction is a (3R)-hydroxyacyl-[ACP] = a (2E)-enoyl-[ACP] + H2O. In terms of biological role, involved in unsaturated fatty acids biosynthesis. Catalyzes the dehydration of short chain beta-hydroxyacyl-ACPs and long chain saturated and unsaturated beta-hydroxyacyl-ACPs. The protein is 3-hydroxyacyl-[acyl-carrier-protein] dehydratase FabZ of Wolbachia sp. subsp. Brugia malayi (strain TRS).